The following is a 587-amino-acid chain: Arginine--tRNA ligase (587 aa).

Residues proline 127 to histidine 137 carry the 'HIGH' region motif.

It belongs to the class-I aminoacyl-tRNA synthetase family. Monomer.

The protein localises to the cytoplasm. The enzyme catalyses tRNA(Arg) + L-arginine + ATP = L-arginyl-tRNA(Arg) + AMP + diphosphate. The chain is Arginine--tRNA ligase from Pseudomonas paraeruginosa (strain DSM 24068 / PA7) (Pseudomonas aeruginosa (strain PA7)).